The chain runs to 890 residues: MAILSNPQFTPSQQAAVDHDGHDILVSASAGSGKTSVLVARVIQKILKGTDVDTLLVVTFTEAAATEMRQRIQAALRDASEKATEPAVKQRLRQQLSLVPTAQISTLHAFCLKVIKQFYYVIDRDPVFRLLSDTAERLLLADQVWQRVREAFYNHEYVKENEQDTLFYELAQNFSNDRNDDGLTDIVFELLDFANANSNPVKWLNKLPKSYAVDEAGLTASDYFQEKILPILQQTITECLEALQEAEQLSKTSENLMIYAPQIATTQAALTQINADAKTLNWQAWRQQLTDAQLGPAKRTKKLEPDEQINKDRLKADLDDVKKKIQTLLDTYFVFDEATTANIQRQAGQLVQKLVSVTLTFREAFQAEKERRHLLDFSDLEQLCLTILSVEDSPARAFYQQKFSEVLVDEYQDTNPLQETIIQKVTSDHPRNLFMVGDVKQSIYAFRLADPSLFKNKYNEFGVTEAERDSERIILAENFRSRRNIDDFTNLIFKQLMDENLGELDYDENAALQYGARYYPDQHPTAPTELLLYETKPEEAVANPQLDKSEGQVVAVAKRIQAMMTNGEQIWDKKLEKMRPIEYRDIVLLAPTRGNNLFILDYFKRFGLPVVIKDAQNYFQTTEVQIMLALLQVIDNPNQDIPLVSVLRSPIVGLNENELALIRINDKTDDYYQAVFNFIDQYNEQKVGHLGQQVMQKLTHFMALLTSFRTIARQQPIVDLIWTIYQETGFLDYVGGMPAGRQRQANLHALYERATAYEENGFKGLFQFIQFIERLQKQDKDLAQPTSLENQDAISVMTIHGSKGLEFPVVFLIDTSRRFNQQDLQRSYVLDNHGGLGVVYLDSQKRLKVPTLPELAITAQKRKKLRAEEMLKTIRCFDTCGTMVNHRWPL.

The 476-residue stretch at Pro-7 to Arg-482 folds into the UvrD-like helicase ATP-binding domain. Ala-28–Thr-35 serves as a coordination point for ATP. The UvrD-like helicase C-terminal domain maps to Ala-510 to Gly-804.

Belongs to the helicase family. AddA subfamily. In terms of assembly, heterodimer of AddA and AddB/RexB. The cofactor is Mg(2+).

It catalyses the reaction Couples ATP hydrolysis with the unwinding of duplex DNA by translocating in the 3'-5' direction.. It carries out the reaction ATP + H2O = ADP + phosphate + H(+). In terms of biological role, the heterodimer acts both as an ATP-dependent DNA helicase and as an ATP-dependent, dual-direction single-stranded exonuclease. Recognizes the chi site generating a DNA molecule suitable for the initiation of homologous recombination. The AddA nuclease domain is required for chi fragment generation; this subunit has the helicase and 3' -&gt; 5' nuclease activities. The chain is ATP-dependent helicase/nuclease subunit A (addA) from Latilactobacillus sakei subsp. sakei (strain 23K) (Lactobacillus sakei subsp. sakei).